The sequence spans 625 residues: MAU2 chromatid cohesion factor homolog (625 aa).

TPR repeat units follow at residues 96-129, 451-484, and 491-524; these read FDTASLLAQLHLKTEQSSHAKAMLRRAVELSQNN, GGFYYVQGLHAFHKNSFHEAKRFLRETLKMANAE, and SCSLVLLSHVFLSIGNSKESMNMVTPAMQLASKI. Over residues 600 to 611 the composition is skewed to polar residues; sequence TVPTTETSTSAL. The interval 600–625 is disordered; it reads TVPTTETSTSALQQPQQPAAQFGQFY. Residues 612–625 are compositionally biased toward low complexity; it reads QQPQQPAAQFGQFY.

The protein belongs to the SCC4/mau-2 family. In terms of assembly, interacts with Nipped-B to form the cohesin loading complex.

It localises to the nucleus. It is found in the nucleoplasm. Its function is as follows. Required for association of the cohesin complex with chromatin during interphase. Plays a role in sister chromatid cohesion and normal progression through prometaphase. This Drosophila mojavensis (Fruit fly) protein is MAU2 chromatid cohesion factor homolog.